The sequence spans 503 residues: Protein-cysteine N-palmitoyltransferase HHAT-like protein (503 aa).

8 helical membrane-spanning segments follow: residues L12–L31, W65–A87, W100–L122, M127–L149, A250–I272, L287–V309, V426–S445, and I460–V482.

The protein belongs to the membrane-bound acyltransferase family. HHAT subfamily. In terms of assembly, interacts with SHH.

Its subcellular location is the endoplasmic reticulum membrane. Functionally, negatively regulates N-terminal palmitoylation of SHH by HHAT/SKN. This chain is Protein-cysteine N-palmitoyltransferase HHAT-like protein (Hhatl), found in Mus musculus (Mouse).